A 236-amino-acid polypeptide reads, in one-letter code: Purine nucleoside phosphorylase DeoD-type 2 (236 aa).

Residue His5 coordinates a purine D-ribonucleoside. Residues Gly21, Arg25, Arg44, and 88 to 91 (RVGS) each bind phosphate. A purine D-ribonucleoside is bound by residues 180 to 182 (DME) and 204 to 205 (SD). Asp205 serves as the catalytic Proton donor.

This sequence belongs to the PNP/UDP phosphorylase family. Homohexamer; trimer of homodimers.

The enzyme catalyses a purine D-ribonucleoside + phosphate = a purine nucleobase + alpha-D-ribose 1-phosphate. It carries out the reaction a purine 2'-deoxy-D-ribonucleoside + phosphate = a purine nucleobase + 2-deoxy-alpha-D-ribose 1-phosphate. In terms of biological role, catalyzes the reversible phosphorolytic breakdown of the N-glycosidic bond in the beta-(deoxy)ribonucleoside molecules, with the formation of the corresponding free purine bases and pentose-1-phosphate. This Aliivibrio fischeri (strain ATCC 700601 / ES114) (Vibrio fischeri) protein is Purine nucleoside phosphorylase DeoD-type 2.